The chain runs to 107 residues: Class I hydrophobin 3 (107 aa).

The signal sequence occupies residues 1–18 (MQFKVLAALVIGATLAAA). Intrachain disulfides connect Cys26–Cys86, Cys33–Cys80, Cys34–Cys67, and Cys87–Cys100. N-linked (GlcNAc...) asparagine glycosylation is found at Asn35 and Asn89.

This sequence belongs to the fungal hydrophobin family. As to quaternary structure, self-assembles to form functional amyloid fibrils called rodlets. Self-assembly into fibrillar rodlets occurs spontaneously at hydrophobic:hydrophilic interfaces and the rodlets further associate laterally to form amphipathic monolayers.

It localises to the secreted. Its subcellular location is the cell wall. Aerial growth, conidiation, and dispersal of filamentous fungi in the environment rely upon a capability of their secreting small amphipathic proteins called hydrophobins (HPBs) with low sequence identity. Class I can self-assemble into an outermost layer of rodlet bundles on aerial cell surfaces, conferring cellular hydrophobicity that supports fungal growth, development and dispersal; whereas Class II form highly ordered films at water-air interfaces through intermolecular interactions but contribute nothing to the rodlet structure. Pnh3 is a class I hydrophobin that might be involved in the attachment of the hydrophilic wall of hyphae to the hydrophobic surface of wood under inorganic phosphate (Pi)-deficient conditions and enable the mycelium to degrade efficiently the components of wood and to acquire nutrients containing Pi. The protein is Class I hydrophobin 3 of Pholiota nameko.